A 321-amino-acid polypeptide reads, in one-letter code: Geranylgeranyl transferase type-2 subunit beta 1 (321 aa).

N-acetylserine is present on Ser2. PFTB repeat units lie at residues 14–55 (ADKH…DLLD), 62–103 (EEEV…ALFD), 110–151 (IGKV…SILK), 158–199 (VEKA…AITG), 206–247 (KDSL…IMID), and 254–296 (KAKL…SLLE). Residues 184 to 186 (HAG) and 226 to 229 (RPEK) each bind geranylgeranyl diphosphate. Zn(2+) contacts are provided by Asp232 and Cys234. 235–238 (YSWW) is a binding site for geranylgeranyl diphosphate. His284 serves as a coordination point for Zn(2+).

Belongs to the protein prenyltransferase subunit beta family. Heterotrimer composed of the alpha subunit RGTA, the beta subunit RGTB and REP; within this trimer, RGTA and RGTB form the catalytic component, while REP mediates peptide substrate binding. Zn(2+) is required as a cofactor. Mg(2+) serves as cofactor.

The catalysed reaction is geranylgeranyl diphosphate + L-cysteinyl-[protein] = S-geranylgeranyl-L-cysteinyl-[protein] + diphosphate. With respect to regulation, the enzymatic reaction requires the aid of the Rab escort protein REP. Functionally, catalyzes the transfer of a geranylgeranyl moiety from geranylgeranyl diphosphate to both cysteines of Rab proteins with the C-terminal sequence -CCXX, CXXX, -XCCX and -XCXC, such as RABA1A, RABA2A, RABF2A and RABG2. Involved in the geranylgeranylation of RABA2A. In vitro, can prenylate PGGTI targets with the C-terminal sequence Cys-aliphatic-aliphatic-X (CaaX) with leucine in the terminal position. Substrates with the C-terminal sequence -CSIL such as ARAC11/ROP1 or GG2/AGG2 are prenylated independently of REP and when the beta subunit is associated with the alpha subunit RGTA1. Required for male fertility and root tip growth. This chain is Geranylgeranyl transferase type-2 subunit beta 1, found in Arabidopsis thaliana (Mouse-ear cress).